An 84-amino-acid polypeptide reads, in one-letter code: UPF0153 protein YeiW (84 aa).

Belongs to the UPF0153 family.

The sequence is that of UPF0153 protein YeiW (yeiW) from Escherichia coli (strain K12).